The chain runs to 525 residues: GMP synthase [glutamine-hydrolyzing] (525 aa).

The region spanning 13-202 (TILVLDFGSQ…AVDLCHAKQN (190 aa)) is the Glutamine amidotransferase type-1 domain. C89 functions as the Nucleophile in the catalytic mechanism. Residues H176 and E178 contribute to the active site. The GMPS ATP-PPase domain maps to 203–400 (WTMENFIDTE…LGIPHDLVWR (198 aa)). 231 to 237 (SGGVDST) is an ATP binding site. K241 is covalently cross-linked (Glycyl lysine isopeptide (Lys-Gly) (interchain with G-Cter in ubiquitin)). Residue R304 participates in XMP binding. Residue K426 forms a Glycyl lysine isopeptide (Lys-Gly) (interchain with G-Cter in ubiquitin) linkage. Residues D462, K517, and E523 each coordinate XMP.

Homodimer. It depends on Mg(2+) as a cofactor.

It is found in the cytoplasm. Its subcellular location is the cytosol. It carries out the reaction XMP + L-glutamine + ATP + H2O = GMP + L-glutamate + AMP + diphosphate + 2 H(+). Its pathway is purine metabolism; GMP biosynthesis; GMP from XMP (L-Gln route): step 1/1. In terms of biological role, catalyzes the conversion of xanthine monophosphate (XMP) to GMP in the presence of glutamine and ATP through an adenyl-XMP intermediate. The protein is GMP synthase [glutamine-hydrolyzing] of Saccharomyces cerevisiae (strain ATCC 204508 / S288c) (Baker's yeast).